Here is a 258-residue protein sequence, read N- to C-terminus: 14-3-3 protein 6 (258 aa).

The tract at residues 238–258 (DMQDDGTDEIKEATPKPDDNE) is disordered. Residues 245–258 (DEIKEATPKPDDNE) are compositionally biased toward basic and acidic residues.

Belongs to the 14-3-3 family. Homodimer.

The protein is 14-3-3 protein 6 (TFT6) of Solanum lycopersicum (Tomato).